The chain runs to 192 residues: Leucine-rich repeat-containing protein 51 (192 aa).

LRR repeat units follow at residues 49–71, 80–101, and 103–124; these read SLTQ…NQVA, NLAW…LTTF, and NLSV…NKLA. Positions 137–175 constitute an LRRCT domain; sequence NPMEEEKGYRQYVLCTLSRITTFDFSGVTKADRTTAEVW.

It localises to the cytoplasm. The polypeptide is Leucine-rich repeat-containing protein 51 (Homo sapiens (Human)).